The sequence spans 298 residues: NAD kinase (298 aa).

Aspartate 80 serves as the catalytic Proton acceptor. NAD(+)-binding positions include 80–81, 154–155, arginine 182, aspartate 184, 195–200, alanine 219, and glutamine 253; these read DG, ND, and TAYALS.

Belongs to the NAD kinase family. A divalent metal cation serves as cofactor.

It localises to the cytoplasm. The enzyme catalyses NAD(+) + ATP = ADP + NADP(+) + H(+). Functionally, involved in the regulation of the intracellular balance of NAD and NADP, and is a key enzyme in the biosynthesis of NADP. Catalyzes specifically the phosphorylation on 2'-hydroxyl of the adenosine moiety of NAD to yield NADP. This Delftia acidovorans (strain DSM 14801 / SPH-1) protein is NAD kinase.